The chain runs to 118 residues: Large ribosomal subunit protein bL20c (118 aa).

Belongs to the bacterial ribosomal protein bL20 family.

It localises to the plastid. Binds directly to 23S ribosomal RNA and is necessary for the in vitro assembly process of the 50S ribosomal subunit. It is not involved in the protein synthesizing functions of that subunit. The sequence is that of Large ribosomal subunit protein bL20c (rpl20) from Cuscuta reflexa (Southern Asian dodder).